The chain runs to 370 residues: Chaperone protein DnaJ (370 aa).

In terms of domain architecture, J spans 6–70; sequence DFYEILGVSK…QKRANYDQFG (65 aa). A CR-type zinc finger spans residues 134-216; that stretch reads GANKSVTLNV…CHGKGFNTKR (83 aa). Zn(2+) contacts are provided by C147, C150, C164, C167, C190, C193, C204, and C207. CXXCXGXG motif repeat units lie at residues 147 to 154, 164 to 171, 190 to 197, and 204 to 211; these read CTSCHGSG, CSRCGGTG, CPDCGGSG, and CGECHGKG.

This sequence belongs to the DnaJ family. Homodimer. Zn(2+) serves as cofactor.

It localises to the cytoplasm. Functionally, participates actively in the response to hyperosmotic and heat shock by preventing the aggregation of stress-denatured proteins and by disaggregating proteins, also in an autonomous, DnaK-independent fashion. Unfolded proteins bind initially to DnaJ; upon interaction with the DnaJ-bound protein, DnaK hydrolyzes its bound ATP, resulting in the formation of a stable complex. GrpE releases ADP from DnaK; ATP binding to DnaK triggers the release of the substrate protein, thus completing the reaction cycle. Several rounds of ATP-dependent interactions between DnaJ, DnaK and GrpE are required for fully efficient folding. Also involved, together with DnaK and GrpE, in the DNA replication of plasmids through activation of initiation proteins. This Erysipelothrix rhusiopathiae protein is Chaperone protein DnaJ.